A 231-amino-acid chain; its full sequence is MHFMDGFLPIGWCVFWAVLAAPFLIYGMWKITKMINNDRHVLPLMAVCGAFIFVVSLVDIPSPTGSCSHPTGTGLSASFFGPAVTSVLGLIILVFQALLLGHGGFTTLGATAFSMAVMGPLAAWLVFKGLRKTGRVPLGPAVFCAAVVANCVTYLITSLQIALAYPVEGSVLTAFLAAAAVFAVVQIPISIIEGIISGLVATYIARIKPEILQKLGVISGEEVKKVLSEQA.

The next 6 helical transmembrane spans lie at 6-26 (GFLP…FLIY), 41-61 (VLPL…VDIP), 79-99 (FFGP…QALL), 107-127 (TLGA…WLVF), 136-156 (VPLG…TYLI), and 172-192 (LTAF…ISII).

This sequence belongs to the CbiM family. As to quaternary structure, forms an energy-coupling factor (ECF) transporter complex composed of an ATP-binding protein (A component, CbiO), a transmembrane protein (T component, CbiQ) and 2 possible substrate-capture proteins (S components, CbiM and CbiN) of unknown stoichimetry.

Its subcellular location is the cell membrane. It functions in the pathway cofactor biosynthesis; adenosylcobalamin biosynthesis. Its function is as follows. Part of the energy-coupling factor (ECF) transporter complex CbiMNOQ involved in cobalt import. This is Putative cobalt transport protein CbiM 1 from Methanocorpusculum labreanum (strain ATCC 43576 / DSM 4855 / Z).